The sequence spans 336 residues: Alcohol dehydrogenase (336 aa).

Positions 37, 58, 89, 92, 95, 103, and 145 each coordinate Zn(2+).

The protein belongs to the zinc-containing alcohol dehydrogenase family. Zn(2+) is required as a cofactor.

It carries out the reaction a primary alcohol + NAD(+) = an aldehyde + NADH + H(+). It catalyses the reaction a secondary alcohol + NAD(+) = a ketone + NADH + H(+). This is Alcohol dehydrogenase (adh) from Staphylococcus aureus (strain Mu50 / ATCC 700699).